Here is a 119-residue protein sequence, read N- to C-terminus: Large ribosomal subunit protein bL20 (119 aa).

The protein belongs to the bacterial ribosomal protein bL20 family.

Binds directly to 23S ribosomal RNA and is necessary for the in vitro assembly process of the 50S ribosomal subunit. It is not involved in the protein synthesizing functions of that subunit. The sequence is that of Large ribosomal subunit protein bL20 from Rhodopseudomonas palustris (strain BisB5).